The chain runs to 92 residues: RNA-binding protein Hfq (92 aa).

In terms of domain architecture, Sm spans 10–71; sequence DLFLNQLRKE…ISSIMPSKPI (62 aa). The disordered stretch occupies residues 73-92; that stretch reads YMAQAQNNQQASQQSNNNQG. Low complexity predominate over residues 75–92; it reads AQAQNNQQASQQSNNNQG.

It belongs to the Hfq family. In terms of assembly, homohexamer.

In terms of biological role, RNA chaperone that binds small regulatory RNA (sRNAs) and mRNAs to facilitate mRNA translational regulation in response to envelope stress, environmental stress and changes in metabolite concentrations. Also binds with high specificity to tRNAs. The protein is RNA-binding protein Hfq of Caldicellulosiruptor bescii (strain ATCC BAA-1888 / DSM 6725 / KCTC 15123 / Z-1320) (Anaerocellum thermophilum).